Reading from the N-terminus, the 210-residue chain is Redox-sensing transcriptional repressor Rex (210 aa).

The segment at residues Lys17–Phe56 is a DNA-binding region (H-T-H motif). Gly91–Gly96 is a binding site for NAD(+).

Belongs to the transcriptional regulatory Rex family. As to quaternary structure, homodimer.

It is found in the cytoplasm. Its function is as follows. Modulates transcription in response to changes in cellular NADH/NAD(+) redox state. The chain is Redox-sensing transcriptional repressor Rex from Clostridium botulinum (strain Eklund 17B / Type B).